Reading from the N-terminus, the 287-residue chain is Polyamine aminopropyltransferase (287 aa).

The 234-residue stretch at 9-242 (GSWLDEYQND…GIWSWTFASI (234 aa)) folds into the PABS domain. An S-methyl-5'-thioadenosine-binding site is contributed by Gln-36. Spermidine contacts are provided by His-67 and Asp-91. S-methyl-5'-thioadenosine contacts are provided by residues Glu-111 and 143–144 (NG). Asp-162 (proton acceptor) is an active-site residue. Pro-169 is a binding site for S-methyl-5'-thioadenosine.

This sequence belongs to the spermidine/spermine synthase family. In terms of assembly, homodimer or homotetramer.

The protein resides in the cytoplasm. It catalyses the reaction S-adenosyl 3-(methylsulfanyl)propylamine + putrescine = S-methyl-5'-thioadenosine + spermidine + H(+). It participates in amine and polyamine biosynthesis; spermidine biosynthesis; spermidine from putrescine: step 1/1. Functionally, catalyzes the irreversible transfer of a propylamine group from the amino donor S-adenosylmethioninamine (decarboxy-AdoMet) to putrescine (1,4-diaminobutane) to yield spermidine. In Prochlorococcus marinus (strain SARG / CCMP1375 / SS120), this protein is Polyamine aminopropyltransferase.